The chain runs to 331 residues: Thiamine thiazole synthase (331 aa).

Residues Ser-82, 103–104 (EA), Gly-111, and Val-176 contribute to the substrate site. A 2,3-didehydroalanine (Cys) modification is found at Cys-210. Residues Asp-212, His-242, Met-296, and 306-308 (RMG) each bind substrate.

This sequence belongs to the THI4 family. Homooctamer. It depends on Fe cation as a cofactor. Post-translationally, during the catalytic reaction, a sulfide is transferred from Cys-210 to a reaction intermediate, generating a dehydroalanine residue.

Its subcellular location is the cytoplasm. It is found in the nucleus. It catalyses the reaction [ADP-thiazole synthase]-L-cysteine + glycine + NAD(+) = [ADP-thiazole synthase]-dehydroalanine + ADP-5-ethyl-4-methylthiazole-2-carboxylate + nicotinamide + 3 H2O + 2 H(+). Involved in biosynthesis of the thiamine precursor thiazole. Catalyzes the conversion of NAD and glycine to adenosine diphosphate 5-(2-hydroxyethyl)-4-methylthiazole-2-carboxylic acid (ADT), an adenylated thiazole intermediate. The reaction includes an iron-dependent sulfide transfer from a conserved cysteine residue of the protein to a thiazole intermediate. The enzyme can only undergo a single turnover, which suggests it is a suicide enzyme. May have additional roles in adaptation to various stress conditions and in DNA damage tolerance. This is Thiamine thiazole synthase from Eremothecium gossypii (strain ATCC 10895 / CBS 109.51 / FGSC 9923 / NRRL Y-1056) (Yeast).